The chain runs to 89 residues: Large ribosomal subunit protein eL31 (89 aa).

It belongs to the eukaryotic ribosomal protein eL31 family.

This Thermoplasma acidophilum (strain ATCC 25905 / DSM 1728 / JCM 9062 / NBRC 15155 / AMRC-C165) protein is Large ribosomal subunit protein eL31 (rpl31e).